Consider the following 98-residue polypeptide: Defensin-like protein 68 (98 aa).

The signal sequence occupies residues 1–19 (MGSSKLLVALTLVVMITIS). 4 disulfide bridges follow: cysteine 38-cysteine 88, cysteine 42-cysteine 65, cysteine 51-cysteine 86, and cysteine 55-cysteine 87.

Belongs to the DEFL family.

The protein resides in the secreted. The chain is Defensin-like protein 68 from Arabidopsis thaliana (Mouse-ear cress).